We begin with the raw amino-acid sequence, 369 residues long: UPF0284 protein sll1500 (369 aa).

It belongs to the UPF0284 family.

This chain is UPF0284 protein sll1500, found in Synechocystis sp. (strain ATCC 27184 / PCC 6803 / Kazusa).